Reading from the N-terminus, the 96-residue chain is Large ribosomal subunit protein bL25 (96 aa).

This sequence belongs to the bacterial ribosomal protein bL25 family. In terms of assembly, part of the 50S ribosomal subunit; part of the 5S rRNA/L5/L18/L25 subcomplex. Contacts the 5S rRNA. Binds to the 5S rRNA independently of L5 and L18.

In terms of biological role, this is one of the proteins that binds to the 5S RNA in the ribosome where it forms part of the central protuberance. The protein is Large ribosomal subunit protein bL25 of Francisella tularensis subsp. holarctica (strain FTNF002-00 / FTA).